A 292-amino-acid polypeptide reads, in one-letter code: Calponin-1 (292 aa).

The 104-residue stretch at 28–131 (PQTERQLRVW…STLIALASQA (104 aa)) folds into the Calponin-homology (CH) domain. 3 Calponin-like repeats span residues 164-189 (IGLQ…RHLY), 204-229 (ISLQ…RQIF), and 243-268 (IGLQ…RQVY). Thr170 carries the phosphothreonine; by ROCK2 modification. Ser175 carries the phosphoserine; by PKC, CaMK2 and ROCK2 modification. Phosphothreonine; by ROCK2 is present on residues Thr180 and Thr184. Thr184 is subject to Phosphothreonine; by PKC and CaMK2. A calmodulin-binding region spans residues 185-193 (RRHLYDPKL). Residue Thr259 is modified to Phosphothreonine; by ROCK2.

Belongs to the calponin family. In terms of processing, phosphorylation by PKC or CaM kinase II reduces the binding of calponin to F-actin and tropomyosin. In terms of tissue distribution, smooth muscle, and tissues containing significant amounts of smooth muscle.

Thin filament-associated protein that is implicated in the regulation and modulation of smooth muscle contraction. It is capable of binding to actin, calmodulin and tropomyosin. The interaction of calponin with actin inhibits the actomyosin Mg-ATPase activity. The sequence is that of Calponin-1 (CNN1) from Gallus gallus (Chicken).